The chain runs to 87 residues: Small ribosomal subunit protein bS20 (87 aa).

The segment covering 1-11 (MANIKSAKKRA) has biased composition (basic residues). The disordered stretch occupies residues 1-27 (MANIKSAKKRAVQSEKRRQHNASQRSM).

Belongs to the bacterial ribosomal protein bS20 family.

Binds directly to 16S ribosomal RNA. This is Small ribosomal subunit protein bS20 from Haemophilus influenzae (strain PittEE).